We begin with the raw amino-acid sequence, 359 residues long: Aflatoxin B1 aldehyde reductase member 2 (359 aa).

A mitochondrion-targeting transit peptide spans 1 to 38; the sequence is MLSAASRVVSRAAVHCALRSPPPEARALAMSRPPPPRV. At serine 40 the chain carries Phosphoserine. NADP(+) is bound at residue aspartate 72. The active-site Proton donor is tyrosine 77. Lysine 128 is subject to N6-acetyllysine. A substrate-binding site is contributed by histidine 141. NADP(+)-binding positions include 171-172, glutamine 197, 226-236, and arginine 250; these read SN and NPLAGGLLTGK. Position 236 is an N6-succinyllysine (lysine 236). Serine 255 is modified (phosphoserine). Residues tyrosine 260 and arginine 263 each coordinate substrate. 318–326 serves as a coordination point for NADP(+); the sequence is SSLEQLEQN. Arginine 359 is a binding site for substrate.

It belongs to the aldo/keto reductase family. Aldo/keto reductase 2 subfamily. In terms of assembly, homodimer. As to expression, detected in brain, liver, small intestine and testis, and at lower levels in heart, prostate, skeletal muscle and spleen. Detected in kidney proximal and distal tubules, endothelial cells lining the Bowman's capsules and some cysts. Detected at low levels in lung and pancreas (at protein level). Widely expressed.

The protein resides in the mitochondrion. It is found in the golgi apparatus. It localises to the cytoplasm. The catalysed reaction is 4-hydroxybutanoate + NADP(+) = succinate semialdehyde + NADPH + H(+). In terms of biological role, catalyzes the NADPH-dependent reduction of succinic semialdehyde to gamma-hydroxybutyrate. May have an important role in producing the neuromodulator gamma-hydroxybutyrate (GHB). Has broad substrate specificity. Has NADPH-dependent aldehyde reductase activity towards 2-carboxybenzaldehyde, 2-nitrobenzaldehyde and pyridine-2-aldehyde (in vitro). Can reduce 1,2-naphthoquinone and 9,10-phenanthrenequinone (in vitro). Can reduce the dialdehyde protein-binding form of aflatoxin B1 (AFB1) to the non-binding AFB1 dialcohol. May be involved in protection of liver against the toxic and carcinogenic effects of AFB1, a potent hepatocarcinogen. The chain is Aflatoxin B1 aldehyde reductase member 2 (AKR7A2) from Homo sapiens (Human).